Here is a 114-residue protein sequence, read N- to C-terminus: Ig heavy chain V-A2 region BS-1 (114 aa).

Gln1 is modified (pyrrolidone carboxylic acid). The Ig-like domain maps to 1–107 (QSVKESEGGL…YLGLMDVWGP (107 aa)).

The protein is Ig heavy chain V-A2 region BS-1 of Oryctolagus cuniculus (Rabbit).